The following is a 64-amino-acid chain: Large ribosomal subunit protein eL37 (64 aa).

Residues 1 to 6 (GRCSAC) form a C4-type zinc finger. Cysteine 3 and cysteine 6 together coordinate Zn(2+).

Belongs to the eukaryotic ribosomal protein eL37 family. Zn(2+) serves as cofactor.

Binds to the 23S rRNA. The chain is Large ribosomal subunit protein eL37 (RPL37) from Solanum lycopersicum (Tomato).